The primary structure comprises 501 residues: Archaemetzincin-1 (501 aa).

Histidine 261 serves as a coordination point for Zn(2+). The Proton acceptor role is filled by glutamate 262. Positions 265, 272, 277, 296, and 299 each coordinate Zn(2+). Residues 349–370 form a disordered region; that stretch reads DSGMGCESDTEPVTSPSEPVTP.

Belongs to the peptidase M54 family. Requires Zn(2+) as cofactor.

Its function is as follows. Probable zinc metalloprotease. The chain is Archaemetzincin-1 (Amz1) from Rattus norvegicus (Rat).